A 244-amino-acid chain; its full sequence is Lipoprotein-releasing system ATP-binding protein LolD (244 aa).

Positions 19–244 constitute an ABC transporter domain; it reads IRAEALAKTY…KLRELAPSAV (226 aa). An ATP-binding site is contributed by 55–62; that stretch reads GASGAGKS.

The protein belongs to the ABC transporter superfamily. Lipoprotein translocase (TC 3.A.1.125) family. In terms of assembly, the complex is composed of two ATP-binding proteins (LolD) and two transmembrane proteins (LolC and LolE).

It localises to the cell inner membrane. Part of the ABC transporter complex LolCDE involved in the translocation of mature outer membrane-directed lipoproteins, from the inner membrane to the periplasmic chaperone, LolA. Responsible for the formation of the LolA-lipoprotein complex in an ATP-dependent manner. This chain is Lipoprotein-releasing system ATP-binding protein LolD, found in Xanthomonas axonopodis pv. citri (strain 306).